Reading from the N-terminus, the 94-residue chain is Co-chaperonin GroES (94 aa).

The protein belongs to the GroES chaperonin family. Heptamer of 7 subunits arranged in a ring. Interacts with the chaperonin GroEL.

The protein resides in the cytoplasm. In terms of biological role, together with the chaperonin GroEL, plays an essential role in assisting protein folding. The GroEL-GroES system forms a nano-cage that allows encapsulation of the non-native substrate proteins and provides a physical environment optimized to promote and accelerate protein folding. GroES binds to the apical surface of the GroEL ring, thereby capping the opening of the GroEL channel. The protein is Co-chaperonin GroES of Streptococcus pneumoniae (strain Hungary19A-6).